The primary structure comprises 206 residues: Small ribosomal subunit protein uS4 (206 aa).

The segment at 15–46 (MGENIWGRPKSPVNKREYGPGQHGQRRKNKLS) is disordered. The S4 RNA-binding domain occupies 94-157 (RRLDAIVYRA…RQLAIVLEAT (64 aa)).

It belongs to the universal ribosomal protein uS4 family. Part of the 30S ribosomal subunit. Contacts protein S5. The interaction surface between S4 and S5 is involved in control of translational fidelity.

Its function is as follows. One of the primary rRNA binding proteins, it binds directly to 16S rRNA where it nucleates assembly of the body of the 30S subunit. With S5 and S12 plays an important role in translational accuracy. The polypeptide is Small ribosomal subunit protein uS4 (Cereibacter sphaeroides (strain ATCC 17025 / ATH 2.4.3) (Rhodobacter sphaeroides)).